The following is a 249-amino-acid chain: Pleckstrin homology domain-containing family F member 2 (249 aa).

Residue Ser-16 is modified to Phosphoserine. Positions 35–131 constitute a PH domain; the sequence is VLIGEGVLTK…WMNHINKCVT (97 aa). At Lys-44 the chain carries N6-acetyllysine. The FYVE-type zinc-finger motif lies at 152 to 212; sequence DSEATVCMRC…ICDFCYDLLS (61 aa). The Zn(2+) site is built by Cys-158, Cys-161, Cys-175, Cys-178, Cys-183, Cys-186, Cys-204, and Cys-207. A compositionally biased stretch (polar residues) spans 221-233; sequence PARSDSYSQSLKS. The interval 221–249 is disordered; that stretch reads PARSDSYSQSLKSPLNDMSDDDDDDDSSD. A compositionally biased stretch (acidic residues) spans 238 to 249; the sequence is MSDDDDDDDSSD. 2 positions are modified to phosphoserine: Ser-239 and Ser-248.

As to quaternary structure, may interact with EEA1. Expressed in placenta, ovary and small intestine, as well as in heart and pancreas. Also expressed in peripheral blood mononuclear cells and dendritic cells.

Its subcellular location is the early endosome membrane. The protein localises to the endoplasmic reticulum. In terms of biological role, may play a role in early endosome fusion upstream of RAB5, hence regulating receptor trafficking and fluid-phase transport. Enhances cellular sensitivity to TNF-induced apoptosis. The polypeptide is Pleckstrin homology domain-containing family F member 2 (PLEKHF2) (Homo sapiens (Human)).